Consider the following 494-residue polypeptide: Maintenance of mitochondrial morphology protein 1 (494 aa).

The Lumenal portion of the chain corresponds to 1 to 22 (MSSQPGDPATLPAQSSLSFTQG). A helical membrane pass occupies residues 23-43 (FLLGQLSVVLVLAAFIKFFIF). Over 44 to 494 (GEAPPPPSRG…GSLPEAVTPG (451 aa)) the chain is Cytoplasmic. Disordered regions lie at residues 50-98 (PSRG…SSST), 274-330 (PPLD…KSNV), 398-426 (VRTGDDAETASNGPRSTVSADIGGSARHE), and 449-494 (VASR…VTPG). The span at 54–64 (LSHRSATHRRS) shows a compositional bias: basic residues. Polar residues-rich tracts occupy residues 65–76 (NSIYSNSPQEAG) and 85–98 (STSNVLRPVPSSST). Residues 130 to 387 (QPESLDWFNV…EPRVQVVGLP (258 aa)) enclose the SMP-LTD domain. A compositionally biased stretch (pro residues) spans 274–286 (PPLDTPSHSPSPP). 2 stretches are compositionally biased toward polar residues: residues 406-416 (TASNGPRSTVS) and 466-477 (RSMTRQESSGDL).

It belongs to the MMM1 family. In terms of assembly, homodimer. Component of the ER-mitochondria encounter structure (ERMES) or MDM complex, composed of mmm1, mdm10, mdm12 and mdm34. A mmm1 homodimer associates with one molecule of mdm12 on each side in a pairwise head-to-tail manner, and the SMP-LTD domains of mmm1 and mdm12 generate a continuous hydrophobic tunnel for phospholipid trafficking.

It localises to the endoplasmic reticulum membrane. Component of the ERMES/MDM complex, which serves as a molecular tether to connect the endoplasmic reticulum (ER) and mitochondria. Components of this complex are involved in the control of mitochondrial shape and protein biogenesis, and function in nonvesicular lipid trafficking between the ER and mitochondria. The mdm12-mmm1 subcomplex functions in the major beta-barrel assembly pathway that is responsible for biogenesis of all outer membrane beta-barrel proteins, and acts in a late step after the SAM complex. The mdm10-mdm12-mmm1 subcomplex further acts in the TOM40-specific pathway after the action of the mdm12-mmm1 complex. Essential for establishing and maintaining the structure of mitochondria and maintenance of mtDNA nucleoids. The protein is Maintenance of mitochondrial morphology protein 1 of Aspergillus clavatus (strain ATCC 1007 / CBS 513.65 / DSM 816 / NCTC 3887 / NRRL 1 / QM 1276 / 107).